The sequence spans 392 residues: Chorismate synthase (392 aa).

The NADP(+) site is built by Arg40 and Arg46. FMN-binding positions include 129–131 (RSS), 257–258 (QA), Gly302, 317–321 (KPIAT), and Arg343.

This sequence belongs to the chorismate synthase family. As to quaternary structure, homotetramer. FMNH2 serves as cofactor.

It carries out the reaction 5-O-(1-carboxyvinyl)-3-phosphoshikimate = chorismate + phosphate. It functions in the pathway metabolic intermediate biosynthesis; chorismate biosynthesis; chorismate from D-erythrose 4-phosphate and phosphoenolpyruvate: step 7/7. Catalyzes the anti-1,4-elimination of the C-3 phosphate and the C-6 proR hydrogen from 5-enolpyruvylshikimate-3-phosphate (EPSP) to yield chorismate, which is the branch point compound that serves as the starting substrate for the three terminal pathways of aromatic amino acid biosynthesis. This reaction introduces a second double bond into the aromatic ring system. This Chloroherpeton thalassium (strain ATCC 35110 / GB-78) protein is Chorismate synthase.